The sequence spans 264 residues: Glycerol uptake facilitator protein (264 aa).

Residues 1–3 lie on the Cytoplasmic side of the membrane; that stretch reads MDK. A helical membrane pass occupies residues 4–32; it reads SLKANCIGEFLGTALLIFFGVGCVAALKV. The Periplasmic portion of the chain corresponds to 33-37; it reads AGASF. Residues 38–58 form a helical membrane-spanning segment; sequence GLWEISIMWGMGVALAVYATA. At 59–61 the chain is on the cytoplasmic side; the sequence is GLS. An intramembrane segment occupies 62–65; that stretch reads GAHL. Positions 66-68 match the NPA 1 motif; sequence NPA. Positions 66–76 form an intramembrane region, helical; it reads NPAVTIALWKF. The Cytoplasmic segment spans residues 77–82; the sequence is ACFDGK. A helical membrane pass occupies residues 83–106; the sequence is KVIPYIISQMLGAFFAAALVYALY. The Periplasmic segment spans residues 107–141; sequence RNVFIDYETVHNIVRGTQESLSLAGTFSTYPHPSL. The chain crosses the membrane as a helical span at residues 142-167; it reads SIGGAFAVEFVITAILMALIMALTDD. Topologically, residues 168–175 are cytoplasmic; it reads GNGVPRGP. The helical transmembrane segment at 176-192 threads the bilayer; the sequence is LAPLLIGILIAVIGGAM. Topologically, residues 193–196 are periplasmic; sequence GPLT. The stretch at 197-200 is an intramembrane region; it reads GFAM. Positions 201 to 203 match the NPA 2 motif; the sequence is NPA. Residues 201–214 constitute an intramembrane region (helical); the sequence is NPARDFGPKFFAYL. Residues 215–229 are Periplasmic-facing; sequence AGWGELALTGGREIP. Residues 230–252 form a helical membrane-spanning segment; it reads YFIVPMVAPVLGALAGAWLYKKA. The Cytoplasmic segment spans residues 253 to 264; it reads IGGNLPCNCGCE.

Belongs to the MIP/aquaporin (TC 1.A.8) family.

The protein localises to the cell inner membrane. The enzyme catalyses glycerol(in) = glycerol(out). Its function is as follows. Mediates glycerol diffusion across the cytoplasmic membrane via a pore-type mechanism. This Haemophilus influenzae (strain ATCC 51907 / DSM 11121 / KW20 / Rd) protein is Glycerol uptake facilitator protein (glpF).